The chain runs to 141 residues: LOB domain-containing protein 34 (141 aa).

The region spanning 16 to 119 (NQCAACRHQR…SPLNYVAPVI (104 aa)) is the LOB domain.

It belongs to the LOB domain-containing protein family.

The chain is LOB domain-containing protein 34 (LBD34) from Arabidopsis thaliana (Mouse-ear cress).